The primary structure comprises 198 residues: Superoxide dismutase [Mn], mitochondrial (198 aa).

A Mn(2+)-binding site is contributed by His-26. Tyr-34 is subject to 3'-nitrotyrosine. Residues Lys-44 and Lys-51 each carry the N6-acetyllysine; alternate modification. N6-succinyllysine; alternate occurs at positions 44 and 51. His-74 is a Mn(2+) binding site. At Lys-90 the chain carries N6-acetyllysine. N6-acetyllysine; alternate is present on residues Lys-98 and Lys-106. Lys-98 and Lys-106 each carry N6-succinyllysine; alternate. Mn(2+) contacts are provided by Asp-159 and His-163. Lys-178 bears the N6-acetyllysine mark.

It belongs to the iron/manganese superoxide dismutase family. As to quaternary structure, homotetramer. Mn(2+) serves as cofactor. Nitrated under oxidative stress. Nitration coupled with oxidation inhibits the catalytic activity. Post-translationally, acetylation at Lys-98 decreases enzymatic activity. Deacetylated by SIRT3 upon exposure to ionizing radiations or after long fasting. In terms of processing, polyubiquitinated; leading to proteasomal degradation. Deubiquitinated by USP36 which increases protein stability.

It localises to the mitochondrion matrix. The enzyme catalyses 2 superoxide + 2 H(+) = H2O2 + O2. Destroys superoxide anion radicals which are normally produced within the cells and which are toxic to biological systems. The protein is Superoxide dismutase [Mn], mitochondrial (SOD2) of Hylobates lar (Lar gibbon).